The sequence spans 278 residues: Adenosylcobinamide-GDP ribazoletransferase (278 aa).

7 consecutive transmembrane segments (helical) span residues 31–51, 66–86, 115–135, 148–168, 187–207, 215–237, and 247–267; these read AMALAPFVGLALGLLAGSAVF, TLLPAVVGVTVLALVTRGLHL, TIGAFGAIIVLFVVLLQVGAL, ILVAAMTSRLAATLACTGAVP, DAALSFLAVCAVAALAGLLDF, ALRAVLAVWVGTGVSFLLRRYLL, and ILGGLIEITAAATLLVMAMTI.

It belongs to the CobS family. The cofactor is Mg(2+).

It is found in the cell membrane. The catalysed reaction is alpha-ribazole + adenosylcob(III)inamide-GDP = adenosylcob(III)alamin + GMP + H(+). It catalyses the reaction alpha-ribazole 5'-phosphate + adenosylcob(III)inamide-GDP = adenosylcob(III)alamin 5'-phosphate + GMP + H(+). Its pathway is cofactor biosynthesis; adenosylcobalamin biosynthesis; adenosylcobalamin from cob(II)yrinate a,c-diamide: step 7/7. Joins adenosylcobinamide-GDP and alpha-ribazole to generate adenosylcobalamin (Ado-cobalamin). Also synthesizes adenosylcobalamin 5'-phosphate from adenosylcobinamide-GDP and alpha-ribazole 5'-phosphate. This chain is Adenosylcobinamide-GDP ribazoletransferase, found in Frankia casuarinae (strain DSM 45818 / CECT 9043 / HFP020203 / CcI3).